A 205-amino-acid chain; its full sequence is uncharacterized protein (205 aa).

This sequence belongs to the peptidase C56 family.

This is an uncharacterized protein from Methanocaldococcus jannaschii (strain ATCC 43067 / DSM 2661 / JAL-1 / JCM 10045 / NBRC 100440) (Methanococcus jannaschii).